Consider the following 89-residue polypeptide: MSLSTEKKAAIVAEFGRDAKDTGSSEVQIALLTAQINHLQAHFAEHKKDHHGRRGLLRMVSRRRKLLDYLKRTDLALYQSTIARLGLRR.

Belongs to the universal ribosomal protein uS15 family. In terms of assembly, part of the 30S ribosomal subunit. Forms a bridge to the 50S subunit in the 70S ribosome, contacting the 23S rRNA.

One of the primary rRNA binding proteins, it binds directly to 16S rRNA where it helps nucleate assembly of the platform of the 30S subunit by binding and bridging several RNA helices of the 16S rRNA. Its function is as follows. Forms an intersubunit bridge (bridge B4) with the 23S rRNA of the 50S subunit in the ribosome. The sequence is that of Small ribosomal subunit protein uS15 from Haemophilus influenzae (strain 86-028NP).